A 95-amino-acid polypeptide reads, in one-letter code: Large ribosomal subunit protein uL23 (95 aa).

It belongs to the universal ribosomal protein uL23 family. As to quaternary structure, part of the 50S ribosomal subunit. Contacts protein L29, and trigger factor when it is bound to the ribosome.

Its function is as follows. One of the early assembly proteins it binds 23S rRNA. One of the proteins that surrounds the polypeptide exit tunnel on the outside of the ribosome. Forms the main docking site for trigger factor binding to the ribosome. This Lawsonia intracellularis (strain PHE/MN1-00) protein is Large ribosomal subunit protein uL23.